The sequence spans 245 residues: Eukaryotic translation initiation factor 6 (245 aa).

Belongs to the eIF-6 family. As to quaternary structure, monomer. Associates with the 60S ribosomal subunit.

The protein resides in the cytoplasm. Its subcellular location is the nucleus. The protein localises to the nucleolus. In terms of biological role, binds to the 60S ribosomal subunit and prevents its association with the 40S ribosomal subunit to form the 80S initiation complex in the cytoplasm. May also be involved in ribosome biogenesis. The sequence is that of Eukaryotic translation initiation factor 6 from Tetrahymena thermophila (strain SB210).